The primary structure comprises 1164 residues: Phytochrome D (1164 aa).

The segment at 1–55 (MVSGGGSKTSGGEAASSGHRRSRHTSAAEQAQSSANKALRSQNQQPQNHGGGTES) is disordered. Positions 25-55 (TSAAEQAQSSANKALRSQNQQPQNHGGGTES) are enriched in polar residues. One can recognise a GAF domain in the interval 255–437 (DIKLLCDTVV…AFGLQLNMEL (183 aa)). A phytochromobilin-binding site is contributed by cysteine 360. PAS domains lie at 656-727 (VARE…LKGD) and 790-861 (DYKA…MIVL). One can recognise a Histidine kinase domain in the interval 938–1157 (YIFQVIKNPL…LIVIELPVPL (220 aa)).

The protein belongs to the phytochrome family. Homodimer. In terms of processing, contains one covalently linked phytochromobilin chromophore.

Regulatory photoreceptor which exists in two forms that are reversibly interconvertible by light: the Pr form that absorbs maximally in the red region of the spectrum and the Pfr form that absorbs maximally in the far-red region. Photoconversion of Pr to Pfr induces an array of morphogenic responses, whereas reconversion of Pfr to Pr cancels the induction of those responses. Pfr controls the expression of a number of nuclear genes including those encoding the small subunit of ribulose-bisphosphate carboxylase, chlorophyll A/B binding protein, protochlorophyllide reductase, rRNA, etc. It also controls the expression of its own gene(s) in a negative feedback fashion. This Arabidopsis thaliana (Mouse-ear cress) protein is Phytochrome D (PHYD).